A 234-amino-acid polypeptide reads, in one-letter code: MLTRKQHELLTFIQTRLEDSGISPSFEEMKEALDLKSKSGVHRLISALEERGFIRRLPNRARALEVLRQPDSAVGKAAPVSQREAANTNSALPPLRAAPKAAPAPANDVIELPLHGKIAAGVPIEALETTATLPVPAALLGAGEHYALEVSGDSMVEAGIFDGDYALVRKTDVARDGEIVVALVRGEEATLKYLHREKGMVRLDPANAAYDPQYYRPEEVAVQGKLAGLLRRYH.

The H-T-H motif DNA-binding region spans 26–46; that stretch reads FEEMKEALDLKSKSGVHRLIS. Positions 73-100 are disordered; that stretch reads AVGKAAPVSQREAANTNSALPPLRAAPK. Positions 91–100 are enriched in low complexity; that stretch reads ALPPLRAAPK. Catalysis depends on for autocatalytic cleavage activity residues S154 and K192.

Belongs to the peptidase S24 family. In terms of assembly, homodimer.

It carries out the reaction Hydrolysis of Ala-|-Gly bond in repressor LexA.. Its function is as follows. Represses a number of genes involved in the response to DNA damage (SOS response), including recA and lexA. In the presence of single-stranded DNA, RecA interacts with LexA causing an autocatalytic cleavage which disrupts the DNA-binding part of LexA, leading to derepression of the SOS regulon and eventually DNA repair. In Novosphingobium aromaticivorans (strain ATCC 700278 / DSM 12444 / CCUG 56034 / CIP 105152 / NBRC 16084 / F199), this protein is LexA repressor.